Here is a 308-residue protein sequence, read N- to C-terminus: Oxygen-dependent coproporphyrinogen-III oxidase (308 aa).

S97 contacts substrate. A divalent metal cation is bound by residues H101 and H111. Catalysis depends on H111, which acts as the Proton donor. N113–R115 is a binding site for substrate. A divalent metal cation-binding residues include H153 and H183. The important for dimerization stretch occupies residues Y248–S283. G266 to R268 contacts substrate.

The protein belongs to the aerobic coproporphyrinogen-III oxidase family. Homodimer. It depends on a divalent metal cation as a cofactor.

It localises to the cytoplasm. The enzyme catalyses coproporphyrinogen III + O2 + 2 H(+) = protoporphyrinogen IX + 2 CO2 + 2 H2O. Its pathway is porphyrin-containing compound metabolism; protoporphyrin-IX biosynthesis; protoporphyrinogen-IX from coproporphyrinogen-III (O2 route): step 1/1. Involved in the heme biosynthesis. Catalyzes the aerobic oxidative decarboxylation of propionate groups of rings A and B of coproporphyrinogen-III to yield the vinyl groups in protoporphyrinogen-IX. The protein is Oxygen-dependent coproporphyrinogen-III oxidase of Polaromonas sp. (strain JS666 / ATCC BAA-500).